A 114-amino-acid polypeptide reads, in one-letter code: Ig heavy chain V region (114 aa).

Residues 1-106 (EVQLQQSGAE…AVRVISRYFD (106 aa)) enclose the Ig-like domain.

The protein is Ig heavy chain V region of Mus musculus (Mouse).